The primary structure comprises 304 residues: Glutaminase (304 aa).

Residues Ser63, Asn114, Glu158, Asn165, Tyr189, Tyr240, and Val258 each coordinate substrate.

The protein belongs to the glutaminase family. Homotetramer.

The enzyme catalyses L-glutamine + H2O = L-glutamate + NH4(+). This is Glutaminase from Shewanella amazonensis (strain ATCC BAA-1098 / SB2B).